Consider the following 232-residue polypeptide: A-type ATP synthase subunit D (232 aa).

It belongs to the V-ATPase D subunit family. As to quaternary structure, has multiple subunits with at least A(3), B(3), C, D, E, F, H, I and proteolipid K(x).

The protein resides in the cell membrane. Functionally, component of the A-type ATP synthase that produces ATP from ADP in the presence of a proton gradient across the membrane. The polypeptide is A-type ATP synthase subunit D (Methanopyrus kandleri (strain AV19 / DSM 6324 / JCM 9639 / NBRC 100938)).